Consider the following 390-residue polypeptide: Formate-dependent phosphoribosylglycinamide formyltransferase (390 aa).

N(1)-(5-phospho-beta-D-ribosyl)glycinamide-binding positions include 18–19 (EL) and glutamate 78. ATP contacts are provided by residues arginine 110, lysine 151, 156 to 161 (SSGKGQ), 191 to 194 (EEFL), and glutamate 199. One can recognise an ATP-grasp domain in the interval 115-305 (DLASKELNIK…EFELHLRAFL (191 aa)). Residues glutamate 264 and glutamate 276 each contribute to the Mg(2+) site. N(1)-(5-phospho-beta-D-ribosyl)glycinamide contacts are provided by residues aspartate 283, lysine 353, and 360-361 (RR).

The protein belongs to the PurK/PurT family. In terms of assembly, homodimer.

The catalysed reaction is N(1)-(5-phospho-beta-D-ribosyl)glycinamide + formate + ATP = N(2)-formyl-N(1)-(5-phospho-beta-D-ribosyl)glycinamide + ADP + phosphate + H(+). It participates in purine metabolism; IMP biosynthesis via de novo pathway; N(2)-formyl-N(1)-(5-phospho-D-ribosyl)glycinamide from N(1)-(5-phospho-D-ribosyl)glycinamide (formate route): step 1/1. In terms of biological role, involved in the de novo purine biosynthesis. Catalyzes the transfer of formate to 5-phospho-ribosyl-glycinamide (GAR), producing 5-phospho-ribosyl-N-formylglycinamide (FGAR). Formate is provided by PurU via hydrolysis of 10-formyl-tetrahydrofolate. The protein is Formate-dependent phosphoribosylglycinamide formyltransferase of Prochlorococcus marinus (strain MIT 9515).